The chain runs to 280 residues: Apoptosis regulator ced-9 (280 aa).

The segment at Gly-33 to Arg-59 is disordered. Polar residues predominate over residues Ser-43–Arg-59. The BH4 motif lies at Ile-80 to Trp-99. The BH1 motif lies at Gln-160–Gly-179. Positions Asn-213 to Lys-229 match the BH2 motif.

It belongs to the Bcl-2 family. In terms of assembly, interacts with asymmetric homodimer ced-4; the interaction sequesters ced-4. Interacts with egl-1; the interaction results in ced-4 release. Interacts with dre-1; the interaction inhibits ced-9 activity, either directly or indirectly. Interacts with dct-1. May form a complex composed of ced-9, ced-4 and mac-1. Interacts with dynamin-related protein drp-1 (via residues 280-502); the interaction is enhanced by GTP rather than GDP; the interaction is probably direct and may occur at the mitochondrion. Interaction with drp-1 may be enhanced by interaction of ced-9 with egl-1, but not with ced-4. A ced-9/egl-1 complex may recruit drp-1 to the mitochondrial surface. Interacts with fzo-1; interaction may be suppressed by interaction of ced-9 with egl-1.

The protein localises to the perikaryon. It is found in the synapse. Its subcellular location is the endomembrane system. It localises to the mitochondrion membrane. The protein resides in the cytoplasm. Functionally, plays a major role in programmed cell death (PCD, apoptosis). egl-1 binds to and directly inhibits the activity of ced-9, releasing the cell death activator ced-4 from a ced-9/ced-4 containing protein complex and allowing ced-4 to activate the cell-killing caspase ced-3. During larval development, required for the elimination of transient presynaptic components downstream of egl-1 and upstream of ced-4 and ced-3 apoptotic pathway. Has been shown in one study to be dispensable in mitochondrial dynamics and morphology during early embryonic development. However, another study shows that a egl-1/ced-9 containing complex may promote drp-1-dependent mitochondrial fission. The polypeptide is Apoptosis regulator ced-9 (ced-9) (Caenorhabditis elegans).